The chain runs to 349 residues: Mediator of RNA polymerase II transcription subunit 19 (349 aa).

The span at 1–28 (MSFHPQTPQSPSHFSPSSSDQSTSMSGS) shows a compositional bias: low complexity. Disordered stretches follow at residues 1 to 81 (MSFH…EQKK) and 238 to 349 (AHLN…VSGI). The span at 29–53 (IVSTTTTLPTPAHSVNGSSLANDMS) shows a compositional bias: polar residues. The span at 70 to 81 (TSDDVGDREQKK) shows a compositional bias: basic and acidic residues. Residues 330–341 (QSYAQARQQSSY) show a composition bias toward low complexity.

It belongs to the Mediator complex subunit 19 family. As to quaternary structure, component of the Mediator complex.

The protein resides in the nucleus. Its function is as follows. Component of the Mediator complex, a coactivator involved in the regulated transcription of nearly all RNA polymerase II-dependent genes. Mediator functions as a bridge to convey information from gene-specific regulatory proteins to the basal RNA polymerase II transcription machinery. Mediator is recruited to promoters by direct interactions with regulatory proteins and serves as a scaffold for the assembly of a functional preinitiation complex with RNA polymerase II and the general transcription factors. The polypeptide is Mediator of RNA polymerase II transcription subunit 19 (rox3) (Neurospora crassa (strain ATCC 24698 / 74-OR23-1A / CBS 708.71 / DSM 1257 / FGSC 987)).